A 553-amino-acid chain; its full sequence is MSFEKLADIIFGNVEHTTEYYVEKYPKRSLKEGARVTRYAPSPTGFQHIGGVFAALINERLASQSEGVFYLRIEDTDQKREVEGAIEDTIATMHNFGMDFSEGMTGEETSKGEYGPYRQSQRAEIYNTFAKDLLIKGLAYPDFCTPEELAQLRERQIANKITPGYYGEYAKFRNITEEEAIKRIENGEKYIIRLKSPGNPEKRVEFHDLIKGDISFPENNQDVVLIKGDGLPTYHFAHAIDDYLMRTTDVIRGEEWLSSLPIHVQLFEVLGFEAPRYAHIPTIMKQDGGSKRKLSKRKDAEAAVSYYKEVGFPVVTVIEYLLNIVNSTYEEWRAENPKADYHEFEVHLEKMGKSGALFDLVKLNDVSKDRIAAMKATDVYEYYTAWAKEFDAEMYKLVTENETMAKEIFNIDKEGPKPRKDFAKWDEVKDKIFYFFDELFYKESAEQIELPKGVTLEAAKEIVETYKKEFKFDVESQEAWFDDLKEIGIRLGYCANRKEFKANPDQYKGMISDVAGAVRAALTHRTNSPDIYTIMQIIGEENTRNRFDKFLNI.

Positions 41 to 51 (PSPTGFQHIGG) match the 'HIGH' region motif. The 'KMSKS' region signature appears at 293–297 (KLSKR). Position 296 (Lys-296) interacts with ATP.

This sequence belongs to the class-I aminoacyl-tRNA synthetase family. Glutamate--tRNA ligase type 1 subfamily. As to quaternary structure, monomer.

It localises to the cytoplasm. The enzyme catalyses tRNA(Glu) + L-glutamate + ATP = L-glutamyl-tRNA(Glu) + AMP + diphosphate. Its function is as follows. Catalyzes the attachment of glutamate to tRNA(Glu) in a two-step reaction: glutamate is first activated by ATP to form Glu-AMP and then transferred to the acceptor end of tRNA(Glu). The protein is Glutamate--tRNA ligase of Clostridium beijerinckii (strain ATCC 51743 / NCIMB 8052) (Clostridium acetobutylicum).